The following is a 419-amino-acid chain: CCA-adding enzyme (419 aa).

Residues Gly8 and Arg11 each contribute to the ATP site. Residues Gly8 and Arg11 each contribute to the CTP site. Asp21 and Asp23 together coordinate Mg(2+). Residues Arg91, Arg137, and Arg140 each coordinate ATP. Residues Arg91, Arg137, and Arg140 each coordinate CTP.

This sequence belongs to the tRNA nucleotidyltransferase/poly(A) polymerase family. Bacterial CCA-adding enzyme type 2 subfamily. It depends on Mg(2+) as a cofactor.

It catalyses the reaction a tRNA precursor + 2 CTP + ATP = a tRNA with a 3' CCA end + 3 diphosphate. The enzyme catalyses a tRNA with a 3' CCA end + 2 CTP + ATP = a tRNA with a 3' CCACCA end + 3 diphosphate. Its function is as follows. Catalyzes the addition and repair of the essential 3'-terminal CCA sequence in tRNAs without using a nucleic acid template. Adds these three nucleotides in the order of C, C, and A to the tRNA nucleotide-73, using CTP and ATP as substrates and producing inorganic pyrophosphate. tRNA 3'-terminal CCA addition is required both for tRNA processing and repair. Also involved in tRNA surveillance by mediating tandem CCA addition to generate a CCACCA at the 3' terminus of unstable tRNAs. While stable tRNAs receive only 3'-terminal CCA, unstable tRNAs are marked with CCACCA and rapidly degraded. The polypeptide is CCA-adding enzyme (Buchnera aphidicola subsp. Baizongia pistaciae (strain Bp)).